The following is a 425-amino-acid chain: Monoacylglycerol lipase ABHD2 (425 aa).

Residues 1-9 (MNAMLETPE) lie on the Cytoplasmic side of the membrane. Residues 10–30 (LPAVFDGVKLAAVAAVLYVIV) traverse the membrane as a helical; Signal-anchor for type II membrane protein segment. The Extracellular portion of the chain corresponds to 31–425 (RCLNLKSPTA…DTEQMEAELE (395 aa)). Residues 128 to 382 (MVICPGIANH…HGGHLGFFEG (255 aa)) form the AB hydrolase-1 domain. An N-linked (GlcNAc...) asparagine glycan is attached at Asn136. Ser207 functions as the Nucleophile in the catalytic mechanism. Residues Asp345 and His376 each act as charge relay system in the active site. N-linked (GlcNAc...) asparagine glycosylation occurs at Asn410.

Belongs to the AB hydrolase superfamily. AB hydrolase 4 family. As to expression, widely expressed with higher expression in testis. Expressed by vascular smooth muscle cells, non vascular smooth muscle cells and heart.

The protein resides in the cell membrane. The protein localises to the cytoplasmic vesicle. It is found in the secretory vesicle. It localises to the acrosome membrane. It carries out the reaction Hydrolyzes glycerol monoesters of long-chain fatty acids.. The enzyme catalyses an acetyl ester + H2O = an aliphatic alcohol + acetate + H(+). It catalyses the reaction a triacylglycerol + H2O = a diacylglycerol + a fatty acid + H(+). The catalysed reaction is 2-(5Z,8Z,11Z,14Z-eicosatetraenoyl)-glycerol + H2O = glycerol + (5Z,8Z,11Z,14Z)-eicosatetraenoate + H(+). It carries out the reaction a butanoate ester + H2O = an aliphatic alcohol + butanoate + H(+). The enzyme catalyses hexadecanoate ester + H2O = an aliphatic alcohol + hexadecanoate + H(+). Acylglycerol lipase activity is activated upon binding to progesterone. Progesterone-dependent acylglycerol lipase that catalyzes hydrolysis of endocannabinoid arachidonoylglycerol (AG) from cell membrane. Acts as a progesterone receptor: progesterone-binding activates the acylglycerol lipase activity, mediating degradation of 1-arachidonoylglycerol (1AG) and 2-arachidonoylglycerol (2AG) to glycerol and arachidonic acid (AA). Also displays an ester hydrolase activity against acetyl ester, butanoate ester and hexadecanoate ester. Plays a key role in sperm capacitation in response to progesterone by mediating degradation of 2AG, an inhibitor of the sperm calcium channel CatSper, leading to calcium influx via CatSper and sperm activation. Involved in acrosomal reaction. May also play a role in smooth muscle cells migration. The sequence is that of Monoacylglycerol lipase ABHD2 (Abhd2) from Mus musculus (Mouse).